We begin with the raw amino-acid sequence, 215 residues long: Agamous-like MADS-box protein AGL63 (215 aa).

An MADS-box domain is found at 1 to 61; the sequence is MRKGKRVIKK…NRLYDFCSNS (61 aa). One can recognise a K-box domain in the interval 90–178; it reads CSDCVKTKES…GSSWEQLMWQ (89 aa). Disordered regions lie at residues 143 to 172 and 184 to 215; these read ARKS…GSSW and MTCQ…SSPP.

As to quaternary structure, forms homodimer. Interacts with AGL16. In terms of tissue distribution, expressed in bud pedicels, petals, anthers, style, ovary, seeds and embryos.

The protein localises to the nucleus. Functionally, probable transcription factor involved in the regulation of fruit growth. Contributes to integument development. Controls organ size via cell expansion. Involved in the regulation of longitudinal growth of the fruit evenly throughout the radial axis. Functions redundantly with TT16/AGL32 to repress nucellus growth and promote its degeneration. This chain is Agamous-like MADS-box protein AGL63, found in Arabidopsis thaliana (Mouse-ear cress).